A 199-amino-acid polypeptide reads, in one-letter code: Transcriptional regulatory protein DesR (199 aa).

The region spanning 3–117 (SIFIAEDQQM…ELANAIRSVM (115 aa)) is the Response regulatory domain. 4-aspartylphosphate is present on aspartate 54. Positions 131-196 (LYSEANPLTD…EAITRSKEKG (66 aa)) constitute an HTH luxR-type domain. The segment at residues 155-174 (TKEIAQELSIKSGTVRNYIS) is a DNA-binding region (H-T-H motif).

In terms of processing, phosphorylated by DesK.

The protein resides in the cytoplasm. In terms of biological role, member of the two-component regulatory system DesR/DesK, responsible for cold induction of the des gene coding for the Delta5 acyl-lipid desaturase. The protein is Transcriptional regulatory protein DesR (desR) of Bacillus subtilis (strain 168).